The chain runs to 168 residues: Endoribonuclease YbeY (168 aa).

Zn(2+)-binding residues include His-132, His-136, and His-142.

The protein belongs to the endoribonuclease YbeY family. The cofactor is Zn(2+).

The protein localises to the cytoplasm. Functionally, single strand-specific metallo-endoribonuclease involved in late-stage 70S ribosome quality control and in maturation of the 3' terminus of the 16S rRNA. The polypeptide is Endoribonuclease YbeY (Clostridium perfringens (strain SM101 / Type A)).